The sequence spans 228 residues: MTSKRTVSDSKRAFFAAYPRPVNSIYRRVIDELLVEVHLLITNQDFRHDPLFATGLLTAYQALMEGYTPVEQRDAILRALCTALELSYEQLHTDAAQWRAIAAELPAQEVLEVMAGKREAGDGRLKAMGDTLAGIANAERFKYSRLFSLGLANILEQAGRAAAMSEKDRLERLQQICTYLKLDYNRVKRDLDFFHSVLERIKRSKEVVDELSQTERRKREERAVSQPG.

A coiled-coil region spans residues Ile201 to Ala223. The disordered stretch occupies residues Asp209–Gly228.

This sequence belongs to the THF1 family.

May be involved in photosynthetic membrane biogenesis. The protein is Protein Thf1 of Gloeobacter violaceus (strain ATCC 29082 / PCC 7421).